Reading from the N-terminus, the 365-residue chain is Alternative oxidase 2, mitochondrial (365 aa).

Residues 32 to 46 show a composition bias toward low complexity; sequence TPPHSTTTTSPSSPA. Residues 32–52 form a disordered region; that stretch reads TPPHSTTTTSPSSPAFHQPNH. Fe cation-binding residues include Glu-166, Glu-205, and His-208. A helical transmembrane segment spans residues 220–242; the sequence is WFTRSIIYVGQGVFTNVFFLLYL. Residues Glu-256, Glu-257, Glu-312, and His-315 each contribute to the Fe cation site. Positions 345–365 are disordered; it reads QPNHGINVMRPTGWEKQDLQL.

This sequence belongs to the alternative oxidase family. Requires Fe cation as cofactor.

The protein localises to the mitochondrion inner membrane. Its function is as follows. Catalyzes cyanide-resistant oxygen consumption. May increase respiration when the cytochrome respiratory pathway is restricted, or in response to low temperatures. The polypeptide is Alternative oxidase 2, mitochondrial (AOX2) (Candida albicans (Yeast)).